The chain runs to 184 residues: Large ribosomal subunit protein uL6 (184 aa).

Belongs to the universal ribosomal protein uL6 family. In terms of assembly, part of the 50S ribosomal subunit.

Functionally, this protein binds to the 23S rRNA, and is important in its secondary structure. It is located near the subunit interface in the base of the L7/L12 stalk, and near the tRNA binding site of the peptidyltransferase center. The sequence is that of Large ribosomal subunit protein uL6 from Amoebophilus asiaticus (strain 5a2).